The primary structure comprises 340 residues: Ferrochelatase (340 aa).

2 residues coordinate Fe cation: histidine 189 and glutamate 292.

This sequence belongs to the ferrochelatase family.

The protein resides in the cytoplasm. It carries out the reaction heme b + 2 H(+) = protoporphyrin IX + Fe(2+). Its pathway is porphyrin-containing compound metabolism; protoheme biosynthesis; protoheme from protoporphyrin-IX: step 1/1. Its function is as follows. Catalyzes the ferrous insertion into protoporphyrin IX. The protein is Ferrochelatase of Pseudomonas aeruginosa (strain LESB58).